The chain runs to 377 residues: Nucleoside diphosphate kinase homolog 7 (377 aa).

A DM10 domain is found at 3–91; that stretch reads HSERFVFIAE…YTARQLGSKK (89 aa).

Belongs to the NDK family. In terms of assembly, component of sperm flagellar doublet microtubules. Component of the gamma-tubulin ring complex. As to expression, expressed in trachea multiciliated cells.

It is found in the cytoplasm. Its subcellular location is the cytoskeleton. It localises to the microtubule organizing center. The protein localises to the centrosome. The protein resides in the nucleus. It is found in the spindle. Its subcellular location is the cilium axoneme. It localises to the flagellum axoneme. The protein localises to the cell projection. The protein resides in the cilium. Functionally, possesses an intrinsic kinase activity. Displays 3'-5' exonuclease activity with a preference for single-stranded DNA. Does not seem to have nucleoside diphosphate kinase activity. Functional component of the gamma-tubulin ring complex, implicated in the regulation of the microtubule-nucleating activity of the gamma-tubulin ring complex in centrosomes, in a kinase activity-dependent manner. Part of the dynein-decorated doublet microtubules (DMTs) in cilia axoneme, which is required for motile cilia beating. The protein is Nucleoside diphosphate kinase homolog 7 (NME7) of Bos taurus (Bovine).